Consider the following 865-residue polypeptide: MNSNQLRETFLNYFKQLDHEVVPGSSLIPENDPTLLFTNAGMVQFKDVFLGVETRPYQRAVSIQPCMRAGGKHNDLENVGYTARHHTFFEMLGNFSFGDYFKRDAIKFAWDFLTNVLKLPPQRLWVTVFQDDFESESIWLKEMKINPERFSRCGEKDNFWQMRDTGPCGPCTEIFYDHGPTISGGPPGSAEADGDRYVEIWNLVFMQYNRDAKGNLLPLAKPSVDTGMGLERLAAVMQGVHDNYDIDLFQYLLKALRTLLKTEDLHNTSMRVIVDHIRSVAFLIADGVIPSNEGRGYVLRRIIRRAVRHGYKLGQEEPFFYQLTKPLVEEMGGAYPLLRKSQALIEQTIKQEEIQFSNTLTKGLKILDHEMAGLPSRQIPGNLIFQLYDTYGFPPDLTADIARERDFVMDYAGFDKAMERQREQSQQAHQFVANYAQKASIGGETQFVGYETLNSQANVISLLQNDQPINRLNESEKGVVVLDRTPFYAESGGQVGDQGFLYFEKGSFRVKDTKKQGDIYLHIGEMLQGHLNVKDKVRAEVDVSRFDIMRNHSATHLLHEALRRVLGERVMQKGSLVEAKRLRFDFSHAKPLTPEELQAVERLVNQQIQANLLSTIEVMTPEEAKKKGALALFGERYGKEVRVLEMGDFSTEICGGTHTERTGEIGLFKIVSESGCAAGIRRIEALTGKAALDYIESAEQQLRSLSDLLKTNRKNLAAKLSQILEDHRKLEKELAKLKQRLASQQLESLINQVVDVHDIRTLAIRLEAVDRETLRAIVDQLKQKLGKAAIVLATIEEGRIQLVAGVTKNCLEHFNATELLAPIAEKVGGRSGGRPDLAQGAGERPENLEAALAAVPKWIEKKLKE.

H552, H556, C654, and H658 together coordinate Zn(2+).

Belongs to the class-II aminoacyl-tRNA synthetase family. It depends on Zn(2+) as a cofactor.

The protein resides in the cytoplasm. The enzyme catalyses tRNA(Ala) + L-alanine + ATP = L-alanyl-tRNA(Ala) + AMP + diphosphate. Its function is as follows. Catalyzes the attachment of alanine to tRNA(Ala) in a two-step reaction: alanine is first activated by ATP to form Ala-AMP and then transferred to the acceptor end of tRNA(Ala). Also edits incorrectly charged Ser-tRNA(Ala) and Gly-tRNA(Ala) via its editing domain. This is Alanine--tRNA ligase from Coxiella burnetii (strain Dugway 5J108-111).